The sequence spans 434 residues: Gamma-glutamyl phosphate reductase (434 aa).

Positions 1-11 are enriched in polar residues; the sequence is MTNSNEAQENA. The disordered stretch occupies residues 1-26; that stretch reads MTNSNEAQENALSPERQAERDEVLAK. Basic and acidic residues predominate over residues 16 to 25; it reads RQAERDEVLA.

This sequence belongs to the gamma-glutamyl phosphate reductase family.

It localises to the cytoplasm. It catalyses the reaction L-glutamate 5-semialdehyde + phosphate + NADP(+) = L-glutamyl 5-phosphate + NADPH + H(+). The protein operates within amino-acid biosynthesis; L-proline biosynthesis; L-glutamate 5-semialdehyde from L-glutamate: step 2/2. Catalyzes the NADPH-dependent reduction of L-glutamate 5-phosphate into L-glutamate 5-semialdehyde and phosphate. The product spontaneously undergoes cyclization to form 1-pyrroline-5-carboxylate. The sequence is that of Gamma-glutamyl phosphate reductase from Corynebacterium jeikeium (strain K411).